We begin with the raw amino-acid sequence, 295 residues long: THO complex subunit 4C (295 aa).

The interval Met-1 to Ser-67 is disordered. An N-acetylserine modification is found at Ser-2. Residues Glu-11–Ala-22 are compositionally biased toward basic and acidic residues. Over residues Gly-38–Val-55 the composition is skewed to gly residues. Residues Thr-107 to Gly-184 form the RRM domain. Residues Gln-212–Ser-295 are disordered. 2 stretches are compositionally biased toward gly residues: residues Gly-213–Pro-227 and Val-242–Arg-267. A compositionally biased stretch (basic and acidic residues) spans Lys-271–His-288.

The protein belongs to the ALYREF family. Interacts with PARP1.

Its subcellular location is the nucleus. The protein resides in the nucleoplasm. It localises to the nucleolus. In terms of biological role, export adapter involved in nuclear export of spliced and unspliced mRNA. In Arabidopsis thaliana (Mouse-ear cress), this protein is THO complex subunit 4C.